We begin with the raw amino-acid sequence, 293 residues long: Cytosolic Fe-S cluster assembly factor CFD1 (293 aa).

Residue 25–32 (GKGGVGKS) participates in ATP binding. 2 residues coordinate [4Fe-4S] cluster: Cys201 and Cys204. The residue at position 291 (Ser291) is a Phosphoserine.

This sequence belongs to the Mrp/NBP35 ATP-binding proteins family. NUBP2/CFD1 subfamily. As to quaternary structure, heterotetramer of 2 NBP35 and 2 CFD1 chains. The cofactor is [4Fe-4S] cluster.

The protein resides in the cytoplasm. Its function is as follows. Component of the cytosolic iron-sulfur (Fe/S) protein assembly (CIA) machinery. Required for maturation of extramitochondrial Fe-S proteins. The NBP35-CFD1 heterotetramer forms a Fe-S scaffold complex, mediating the de novo assembly of an Fe-S cluster and its transfer to target apoproteins. Nucleotide binding/hydrolysis seems to be critcal for loading of Fe-S clusters onto CFD1 and NBP35. Required for biogenesis and export of both ribosomal subunits, which may reflect a role in assembly of the Fe/S clusters in RLI1, a protein which performs rRNA processing and ribosome export. The protein is Cytosolic Fe-S cluster assembly factor CFD1 of Saccharomyces cerevisiae (strain ATCC 204508 / S288c) (Baker's yeast).